We begin with the raw amino-acid sequence, 404 residues long: Glutamate-pyruvate aminotransferase AlaA (404 aa).

Residues Gly41 and Asn179 each contribute to the L-alanine site. Position 240 is an N6-(pyridoxal phosphate)lysine (Lys240). Arg378 contributes to the L-alanine binding site.

Belongs to the class-I pyridoxal-phosphate-dependent aminotransferase family. As to quaternary structure, homodimer. Pyridoxal 5'-phosphate is required as a cofactor.

The catalysed reaction is L-alanine + 2-oxoglutarate = pyruvate + L-glutamate. Its pathway is amino-acid biosynthesis; L-alanine biosynthesis. Its function is as follows. Involved in the biosynthesis of alanine. Catalyzes the transamination of pyruvate by glutamate, leading to the formation of L-alanine and 2-oxoglutarate. Is also able to catalyze the reverse reaction. The protein is Glutamate-pyruvate aminotransferase AlaA (alaA) of Haemophilus influenzae (strain ATCC 51907 / DSM 11121 / KW20 / Rd).